A 766-amino-acid polypeptide reads, in one-letter code: Dipeptidyl peptidase 4 (766 aa).

At 1-6 (MKTPWK) the chain is on the cytoplasmic side. A helical; Signal-anchor for type II membrane protein membrane pass occupies residues 7-27 (VLLGLLGIAALVTVITVPVVL). The Extracellular segment spans residues 28–766 (LNKGTDDAAA…HFLKQCFSLP (739 aa)). N-linked (GlcNAc...) asparagine glycosylation is found at Asn-85, Asn-92, Asn-150, Asn-179, Asn-219, Asn-229, Asn-279, and Asn-321. Cystine bridges form between Cys-385–Cys-394, Cys-444–Cys-447, and Cys-454–Cys-472. Ser-630 (charge relay system) is an active-site residue. An intrachain disulfide couples Cys-649 to Cys-762. A glycan (N-linked (GlcNAc...) asparagine) is linked at Asn-685. Residues Asp-708 and His-740 each act as charge relay system in the active site.

Belongs to the peptidase S9B family. DPPIV subfamily. As to quaternary structure, monomer. Homodimer. Heterodimer with Seprase (FAP). Requires homodimerization for optimal dipeptidyl peptidase activity and T-cell costimulation. Found in a membrane raft complex, at least composed of BCL10, CARD11, DPP4 and IKBKB. Associates with collagen. Interacts with PTPRC; the interaction is enhanced in an interleukin-12-dependent manner in activated lymphocytes. Interacts (via extracellular domain) with ADA; does not inhibit its dipeptidyl peptidase activity. Interacts with CAV1 (via the N-terminus); the interaction is direct. Interacts (via cytoplasmic tail) with CARD11 (via PDZ domain); its homodimerization is necessary for interaction with CARD11. Interacts with IGF2R; the interaction is direct. Interacts with GPC3. Post-translationally, the soluble form (Dipeptidyl peptidase 4 soluble form also named SDPP) derives from the membrane form (Dipeptidyl peptidase 4 membrane form also named MDPP) by proteolytic processing. N- and O-Glycosylated. In terms of processing, phosphorylated. Mannose 6-phosphate residues in the carbohydrate moiety are necessary for interaction with IGF2R in activated T-cells. Mannose 6-phosphorylation is induced during T-cell activation.

Its subcellular location is the secreted. It localises to the cell membrane. The protein localises to the apical cell membrane. It is found in the cell projection. The protein resides in the invadopodium membrane. Its subcellular location is the lamellipodium membrane. It localises to the cell junction. The protein localises to the membrane raft. The enzyme catalyses Release of an N-terminal dipeptide, Xaa-Yaa-|-Zaa-, from a polypeptide, preferentially when Yaa is Pro, provided Zaa is neither Pro nor hydroxyproline.. With respect to regulation, inhibited by GPC3 and diprotin A. Its function is as follows. Cell surface glycoprotein receptor involved in the costimulatory signal essential for T-cell receptor (TCR)-mediated T-cell activation. Acts as a positive regulator of T-cell coactivation, by binding at least ADA, CAV1, IGF2R, and PTPRC. Its binding to CAV1 and CARD11 induces T-cell proliferation and NF-kappa-B activation in a T-cell receptor/CD3-dependent manner. Its interaction with ADA also regulates lymphocyte-epithelial cell adhesion. In association with FAP is involved in the pericellular proteolysis of the extracellular matrix (ECM), the migration and invasion of endothelial cells into the ECM. May be involved in the promotion of lymphatic endothelial cells adhesion, migration and tube formation. When overexpressed, enhanced cell proliferation, a process inhibited by GPC3. Also acts as a serine exopeptidase with a dipeptidyl peptidase activity that regulates various physiological processes by cleaving peptides in the circulation, including many chemokines, mitogenic growth factors, neuropeptides and peptide hormones such as brain natriuretic peptide 32. Removes N-terminal dipeptides sequentially from polypeptides having unsubstituted N-termini provided that the penultimate residue is proline. This chain is Dipeptidyl peptidase 4 (DPP4), found in Sus scrofa (Pig).